The primary structure comprises 503 residues: Cytochrome P450 monooxygenase roqO (503 aa).

A helical membrane pass occupies residues 11-31; that stretch reads YSGTACAISLFIFGITLLFPF. N-linked (GlcNAc...) asparagine glycosylation occurs at Asn205. Position 444 (Cys444) interacts with heme.

This sequence belongs to the cytochrome P450 family. It depends on heme as a cofactor.

It localises to the membrane. It participates in alkaloid biosynthesis. Cytochrome P450 monooxygenase; part of the gene cluster that mediates the biosynthesis of the mycotoxin meleagrin. The first stage is catalyzed by the dipeptide synthase roqA which condenses histidine and tryptophan to produce histidyltryptophanyldiketopiperazine (HTD). HTD is then converted to roquefortine C through two possible pathways. In the first pathway, prenyltransferase roqD transforms HTD to the intermediate roquefortine D, which is in turn converted to roquefortine C by the cytochrome P450 monooxygenase roqR. In the second pathway, HTD is first converted to the intermediate dehydrohistidyltryptophanyldi-ketopiperazine (DHTD) by roqR which is then prenylated by roqD to form roquefortine C. Roquefortine C can be further transformed to meleagrin via three more reactions including oxydation to glandicolin A by roqM, which is further reduced to glandicoline B by roqO. Finally, glandicoline B is converted to meleagrin by the glandicoline B O-methyltransferase roqN. More studies identified further branching and additional metabolites produced by the roquefortine/meleagrin cluster, including roquefortine F, roquefortine L, roquefortine M, roquefortine N and neoxaline. The chain is Cytochrome P450 monooxygenase roqO from Penicillium rubens (strain ATCC 28089 / DSM 1075 / NRRL 1951 / Wisconsin 54-1255) (Penicillium chrysogenum).